The chain runs to 21 residues: Antimicrobial peptide scolopin-1 (21 aa).

Expressed by the venom gland.

It is found in the secreted. Its function is as follows. Antimicrobial peptide against both Gram-positive, -negative and yeast. Also induces histamine release by mast cells and shows moderate hemolytic activities against both human and rabbit red cells. This Scolopendra mutilans (Chinese red-headed centipede) protein is Antimicrobial peptide scolopin-1.